The primary structure comprises 218 residues: MAQISAKLVKELRDKTGAGMMDCKKALGETNGDITKAIEWLRQKGITSAEKKAGRVAAEGLIESYIHTGGGIGVLVEVNCETDFVARGDIFKDLAKGIAMQIAACPNVQYVKVDDIPTEIADKEREIEMGRDDLAGKPDNIKEKIVEGRIAKRLKELSLMDQPYIRDQNMTVEELVKQSIATIGENIQIRRFQRFVLGEGIEKKEEDFAAEVAAQMGQ.

Residues 82-85 (TDFV) form an involved in Mg(2+) ion dislocation from EF-Tu region.

Belongs to the EF-Ts family.

Its subcellular location is the cytoplasm. In terms of biological role, associates with the EF-Tu.GDP complex and induces the exchange of GDP to GTP. It remains bound to the aminoacyl-tRNA.EF-Tu.GTP complex up to the GTP hydrolysis stage on the ribosome. This Picosynechococcus sp. (strain ATCC 27264 / PCC 7002 / PR-6) (Agmenellum quadruplicatum) protein is Elongation factor Ts.